Consider the following 358-residue polypeptide: Tyrosinase ustQ (358 aa).

N-linked (GlcNAc...) asparagine glycosylation occurs at asparagine 28. A helical transmembrane segment spans residues 37-57 (FVPVYAGLTIISLITVTVSLV). 2 N-linked (GlcNAc...) asparagine glycosylation sites follow: asparagine 91 and asparagine 109. Positions 128 and 137 each coordinate Cu cation. Residues asparagine 172 and asparagine 214 are each glycosylated (N-linked (GlcNAc...) asparagine). Histidine 266, histidine 270, and histidine 292 together coordinate Cu cation. N-linked (GlcNAc...) asparagine glycans are attached at residues asparagine 321 and asparagine 325.

It belongs to the tyrosinase family. Requires Cu(2+) as cofactor.

The protein resides in the membrane. The enzyme catalyses 2 L-dopa + O2 = 2 L-dopaquinone + 2 H2O. It carries out the reaction L-tyrosine + O2 = L-dopaquinone + H2O. The protein operates within mycotoxin biosynthesis. In terms of biological role, tyrosinase; part of the gene cluster that mediates the biosynthesis of the secondary metabolite ustiloxin B, an antimitotic tetrapeptide. First, ustA is processed by the subtilisin-like endoprotease Kex2 that is outside the ustiloxin B gene cluster, at the C-terminal side of Arg-Lys, after transfer to Golgi apparatus through the endoplasmic reticulum (ER). Cleavage by KEX2 generates 16 peptides YAIG-I to YAIG-XVI. To process the precursor peptide further, at least two peptidases are necessary to cleave the N-terminal and C-terminal sides of the Tyr-Ala-Ile-Gly core peptide which serves as backbone for the synthesis of ustiloxin B, through cyclization and modification of the tyrosine with a non-protein coding amino acid, norvaline. One of the two peptidases must be the serine peptidase ustP; and the other pepdidase is probably ustH. Macrocyclization of the core peptide derived from ustA requires the tyrosinase ustQ, as well as the homologous oxidases ustYa and ustYb, and leads to the production of the first cyclization product N-desmethylustiloxin F. For the formation of N-desmethylustiloxin F, three oxidation steps are required, hydroxylation at the benzylic position, hydroxylation at either the aromatic ring of Tyr or beta-position of Ile, and oxidative cyclization. UstQ may catalyze the oxidation of a phenol moiety, whereas the ustYa and ustYb are most likely responsible for the remaining two-step oxidations. N-desmethylustiloxin F is then methylated by ustM to yield ustiloxin F which in turn substrate of the cytochrome P450 monooxygenase ustC which catalyzes the formation of S-deoxyustiloxin H. The flavoprotein monooxygenases ustF1 and ustF2 then participate in the modification of the side chain of S-deoxyustiloxin H, leading to the synthesis of an oxime intermediate, via ustiloxin H. Finally, carboxylative dehydration performed by the cysteine desulfurase-like protein ustD yields ustiloxin B. This is Tyrosinase ustQ from Aspergillus flavus (strain ATCC 200026 / FGSC A1120 / IAM 13836 / NRRL 3357 / JCM 12722 / SRRC 167).